The following is a 145-amino-acid chain: Androgenic gland hormone (145 aa).

Positions 1-21 (MKGLLFIVSLLCLTLHQRVWA) are cleaved as a signal peptide. Intrachain disulfides connect C33/C122, C42/C59, C44/C140, and C123/C131. Residues 68 to 112 (SADDEDYLFEEDEDDEFFHPRALSPPAAKSGDERLEDEVSFHSRS) constitute a propeptide, c peptide. The N-linked (GlcNAc...) asparagine glycan is linked to N132.

As to expression, androgenic gland.

The protein localises to the secreted. Its function is as follows. Controls sex differentiation and the formation of male appendages, spermatogenesis, pigmentation, and male specific behavior. The protein is Androgenic gland hormone (AGH) of Porcellio scaber (Common rough woodlouse).